Reading from the N-terminus, the 450-residue chain is MEDVWLQAQSNLAKVLTHQTFTTWIEPIRFAGAHKNTLLLEAPNQFIRDRVRESYLPMILESVRSLTDSHFQVELQVAARQQEKTAKSPRKSHTEDELGPVESEKCAPAEFSTNLNAKYTFDTFVCGGSNQFAHAAALSVANNPAGKYNPLFIYGGVGLGKTHLLTAIGNQVLTKNRKARVCFYTSEKFMNELINCLRYQKMEQFRNKFRKMDLLLIDDIQFIAGKERTQEEFFHTFNALYESHKQIVVTSDKFPKDIPGLEERLRSRFEWGLIADIQPPDTETKVAILSKKADSDGIRLPDDVALFLASSASTNVRELEGMLIRLGAVASLTGKNITLDMAREVLKDIIVDKTKEVTVEMIQKYVADHFNIKVAELKSDKRLKALVVPRQIAIYLCRDLTKASYPDIGEKFGGKDHSTIIHSVKKVDKLLSQDFELKSTIETLRKGLLN.

The tract at residues 1–71 is domain I, interacts with DnaA modulators; sequence MEDVWLQAQS…SVRSLTDSHF (71 aa). The interval 71 to 113 is domain II; that stretch reads FQVELQVAARQQEKTAKSPRKSHTEDELGPVESEKCAPAEFST. Residues 82 to 103 are disordered; sequence QEKTAKSPRKSHTEDELGPVES. Positions 114–330 are domain III, AAA+ region; that stretch reads NLNAKYTFDT…GMLIRLGAVA (217 aa). ATP-binding residues include glycine 158, glycine 160, lysine 161, and threonine 162. The segment at 331–450 is domain IV, binds dsDNA; it reads SLTGKNITLD…IETLRKGLLN (120 aa).

The protein belongs to the DnaA family. In terms of assembly, oligomerizes as a right-handed, spiral filament on DNA at oriC.

Its subcellular location is the cytoplasm. Plays an essential role in the initiation and regulation of chromosomal replication. ATP-DnaA binds to the origin of replication (oriC) to initiate formation of the DNA replication initiation complex once per cell cycle. Binds the DnaA box (a 9 base pair repeat at the origin) and separates the double-stranded (ds)DNA. Forms a right-handed helical filament on oriC DNA; dsDNA binds to the exterior of the filament while single-stranded (ss)DNA is stabiized in the filament's interior. The ATP-DnaA-oriC complex binds and stabilizes one strand of the AT-rich DNA unwinding element (DUE), permitting loading of DNA polymerase. After initiation quickly degrades to an ADP-DnaA complex that is not apt for DNA replication. Binds acidic phospholipids. The polypeptide is Chromosomal replication initiator protein DnaA (Geobacter metallireducens (strain ATCC 53774 / DSM 7210 / GS-15)).